Here is a 560-residue protein sequence, read N- to C-terminus: Synaptotagmin-5 (560 aa).

Residues 2–22 (GFIVGVVIGLLVGIAIIIGFV) form a helical membrane-spanning segment. The SMP-LTD domain occupies 67–249 (ERQKLTWLNH…WPVRKVIPII (183 aa)). Residues 227–523 (EETIRDAVED…YIGRCILTLT (297 aa)) are phospholipid binding. C2 domains are found at residues 243–364 (RKVI…DVWL) and 417–535 (TTDE…KDWY). Residues Asp-278, Asp-284, Asp-334, Glu-336, Asp-451, Asp-457, Asp-506, Asp-508, and Asp-513 each coordinate Ca(2+).

Belongs to the synaptotagmin family. It depends on Ca(2+) as a cofactor.

Its subcellular location is the membrane. Functionally, may be involved in membrane trafficking. The polypeptide is Synaptotagmin-5 (SYT5) (Arabidopsis thaliana (Mouse-ear cress)).